The chain runs to 450 residues: MQSIFGTDGIRGRFNEEITYSLAYKVGYALGSTLEKEKPILIGRDTRISGDILLQAITRGLNESGKKFINLGICPTPAIPYLIKQENLSSGIMISASHNPPEYNGIKIFDHSGQKITKHFENKIQKLIEELNQNISVPRKVIPLNKNKDLMDIYIKSLIQTMGGENLSGLKIILDTCHGSATTCAKKIFQYLGADVKVINNSKNGLKINMNCGSTNLEPLKKALIESPAHMGFSFDGDADRVIGIDSKGNVLDGDHILFLWGRELMEQKILTNNLLISTQMANLGFEKAWEKIGGILYRTDVGDKYVRDAIKEKRAVLGGEQSGHILSKINNFSGDGILTALQICKYCKKKNINLNDWLKSSFEPFPQKLTNINLDFNINKLNPKTKILIDQTIENFQAIYSDNCRVYIRPSGTEPVMRVLVEAKNHDKVNSLSSEITKKLFSEINKIIN.

Residue Ser97 is the Phosphoserine intermediate of the active site. 4 residues coordinate Mg(2+): Ser97, Asp236, Asp238, and Asp240. Residue Ser97 is modified to Phosphoserine.

The protein belongs to the phosphohexose mutase family. It depends on Mg(2+) as a cofactor. Post-translationally, activated by phosphorylation.

It carries out the reaction alpha-D-glucosamine 1-phosphate = D-glucosamine 6-phosphate. Catalyzes the conversion of glucosamine-6-phosphate to glucosamine-1-phosphate. The chain is Phosphoglucosamine mutase from Prochlorococcus marinus (strain MIT 9215).